A 386-amino-acid chain; its full sequence is Putrescine N-methyltransferase 4 (386 aa).

3 stretches are compositionally biased toward polar residues: residues 1-14 (MEVISTNTNGSTIF), 23-48 (GHQSGTSKHLNGYQNGTSKHQNGHHN), and 57-87 (HQNGISEHQNGHQNGTSEQQNGTISHDNGNE). Residues 1 to 87 (MEVISTNTNG…GTISHDNGNE (87 aa)) form a disordered region. A PABS domain is found at 97-334 (LGWFSEFSAL…GVIGYMLCST (238 aa)). S-adenosyl-L-methionine contacts are provided by residues Gln-128, Glu-203, and 234–235 (DG). Asp-253 functions as the Proton acceptor in the catalytic mechanism. An S-adenosyl-L-methionine-binding site is contributed by Tyr-322.

It belongs to the class I-like SAM-binding methyltransferase superfamily. Putrescine methyltransferase family. As to expression, predominantly expressed in roots.

The enzyme catalyses putrescine + S-adenosyl-L-methionine = N-methylputrescine + S-adenosyl-L-homocysteine + H(+). The protein operates within alkaloid biosynthesis; nicotine biosynthesis. Its function is as follows. Involved in the biosynthesis of pyridine alkaloid natural products, leading mainly to the production of anabasine, anatabine, nicotine and nornicotine, effective deterrents against herbivores with antiparasitic and pesticide properties (neurotoxins); nornicotine serves as the precursor in the synthesis of the carcinogen compound N'-nitrosonornicotine (NNN). Methyltransferase that mediates the conversion of putrescine to N-methylputrescine. Promotes leaves ripening. This Nicotiana tabacum (Common tobacco) protein is Putrescine N-methyltransferase 4.